The primary structure comprises 168 residues: uncharacterized protein (168 aa).

The N-acetyltransferase domain occupies 14 to 168 (IDIPLLDAAS…EYKHWIYVTK (155 aa)).

This sequence belongs to the acetyltransferase family.

This is an uncharacterized protein from Bacillus subtilis (strain 168).